A 274-amino-acid polypeptide reads, in one-letter code: Diaminopimelate epimerase (274 aa).

Substrate contacts are provided by N11, Q44, and N64. The active-site Proton donor is C73. Substrate is bound by residues 74–75 (GN), N157, N190, and 208–209 (ER). Residue C217 is the Proton acceptor of the active site. 218 to 219 (GS) lines the substrate pocket.

This sequence belongs to the diaminopimelate epimerase family. As to quaternary structure, homodimer.

It localises to the cytoplasm. The catalysed reaction is (2S,6S)-2,6-diaminopimelate = meso-2,6-diaminopimelate. It participates in amino-acid biosynthesis; L-lysine biosynthesis via DAP pathway; DL-2,6-diaminopimelate from LL-2,6-diaminopimelate: step 1/1. Catalyzes the stereoinversion of LL-2,6-diaminopimelate (L,L-DAP) to meso-diaminopimelate (meso-DAP), a precursor of L-lysine and an essential component of the bacterial peptidoglycan. The chain is Diaminopimelate epimerase from Enterobacter sp. (strain 638).